The sequence spans 348 residues: MNDRQAALDQALKQIEKQFGKGSIMKLGEHSDQNISTISSGSLALDIALGVGGYPRGRIIEVYGPESSGKTTVALHAIAEVQAQGGTAAFIDAEHALDPAYAKNLGVNIDELLLSQPDTGEQALEIAEALVRSGAVDMLVIDSVAALVPRAEIEGEMGDAHVGLQARLMSQALRKLSGVINKSKTIAIFINQIREKVGVMFGNPEITPGGRALKFYSTVRLEVRRAEQLKQGTDVMGNKTKIKVVKNKVAPPFRIAEVDIMYGEGISREGELVDMAAEVDVINKSGSWYSYKEERIGQGRENAKQYLKEHTDIRDEISKRVREEYEIDGTNKEPLDENEETLSLLDDE.

ATP is bound at residue 64–71 (GPESSGKT). Over residues 326–335 (EIDGTNKEPL) the composition is skewed to basic and acidic residues. Positions 326–348 (EIDGTNKEPLDENEETLSLLDDE) are disordered. Residues 336-348 (DENEETLSLLDDE) show a composition bias toward acidic residues.

The protein belongs to the RecA family.

It localises to the cytoplasm. Can catalyze the hydrolysis of ATP in the presence of single-stranded DNA, the ATP-dependent uptake of single-stranded DNA by duplex DNA, and the ATP-dependent hybridization of homologous single-stranded DNAs. It interacts with LexA causing its activation and leading to its autocatalytic cleavage. This Listeria innocua serovar 6a (strain ATCC BAA-680 / CLIP 11262) protein is Protein RecA.